The following is a 651-amino-acid chain: Cylicin-1 (651 aa).

Disordered stretches follow at residues 110–241 (LKKA…CSEN) and 267–615 (NYSQ…CEPS). Basic and acidic residues-rich tracts occupy residues 111-129 (KKAE…PLKK) and 146-173 (QIVE…EQSK). A compositionally biased stretch (polar residues) spans 186–195 (QNSKTVSKNC). Basic and acidic residues predominate over residues 196–205 (SQKDKKDSKN). Residues 230 to 241 (SNDPISEICSEN) show a composition bias toward polar residues. Over residues 271–281 (NNSKNYSLKYT) the composition is skewed to low complexity. 8 tandem repeats follow at residues 278 to 305 (LKYT…DSKD), 306 to 342 (AKKD…DSKD), 343 to 379 (ERKD…DAKD), 380 to 417 (ARND…ESKE), 418 to 453 (SQKD…PKGD), 454 to 491 (SKKG…SDLE), 492 to 531 (LKKD…SKTG), and 532 to 553 (FKTS…YKPG). Basic and acidic residues-rich tracts occupy residues 284–308 (TKKD…DAKK), 318–331 (KKDD…KDTE), 338–368 (GDSK…KYPE), 375–402 (GDAK…DAKK), 413–441 (LESK…KNDE), and 448–482 (SEPK…KNAE). Residues 495–505 (DKKHSKEKKGS) are compositionally biased toward basic residues. Residues 506 to 518 (KKDIKKDARKDTE) show a composition bias toward basic and acidic residues. Over residues 529 to 538 (KTGFKTSTKI) the composition is skewed to polar residues. The tract at residues 532–553 (FKTSTKIKGSDTESEESLYKPG) is 8 X approximate tandem repeats. Basic and acidic residues predominate over residues 587–607 (TFNEKGEKASTGRVPPSREKP).

In terms of assembly, interacts with proteins of spermatozoa head including ACTL7A, CCIN, FAM209A and SPACA1; the interactions may be necessary for proper acrosome attachment to the nuclear envelope. Testis.

Its subcellular location is the cytoplasm. It is found in the cytoskeleton. The protein localises to the perinuclear theca. It localises to the calyx. In terms of biological role, plays a role in the establishment of normal sperm morphology during spermatogenesis and is required for acrosome attachment to the nuclear envelope. This Homo sapiens (Human) protein is Cylicin-1 (CYLC1).